Reading from the N-terminus, the 900-residue chain is MPQVDPELFDRSQFQAELALKASPIAAYKKAIRQARQVLDERFRAGRDIRRLIEDRAWFVDQILRSAWSRFDWDKGADIALVAVGGYGRGELHPYSDIDLLILLDENDQEIFREPIEGFLTLLWDIGLEVGQAVRSVAECADEARADLTVITNLMESRTIAGPERLRQAMLQVTSTQQMWPSKEFFLAKRNEQRARHAKYNNTEYNLEPNVKGSPGGLRDIQTILWIARREFGTLNLQAMVDQGFITEGEHSLLTAAQEFLWKVRYGLHMLAGRAEDRLLFDHQRSLAALLGYEDSDAKLAIERFMQKYYRVVMSIAELSDLVGQHFAEVILWEGESGPIVPLNSRFQVRDGYLEVSNPAIFKRTPFAILETFVLLAQHPDIQGVRSDTIRLLRDHRYLIDDTFRQDLRNTSLFIELFKCKEGIHRNLRRMNRYGILGRYLPEFGHIVGQMQHDLFHIYTVDAHTLNVIKYLRKLTKPGVAEKYPLASKLVEKLPKPELIYIAGLYHDIAKGRGGDHSELGAVDAEQFCRRHKLPAWDTRLVVWLVENHLVMSTTAQRKDLSDPQVINDFAQRVGDETHLDYLYVLTVADINATNPTLWNSWRASLLRQLYTETKRALKRGLENPLGREEQIRQTQRAALDDLVRHGTDPDDAEQLWAQLGDDYFLRHTATDVAWHTDAIIEHPANGGPLVLIKETTQREFEGGTQIFIYAPDQHDFFAVTVAAMDQLNLNIHDARILTSSSQFTLDTYIVLEADGSPIGNNPERIEEIRSGLIAALRNPDDYLTIIQRRVPRQLKHFAFPPQVTIHNDTQRPQTILEIIAPDRPGLLARVGQLFLDFDLSVQNAKIATLGERVEDVFFVTDADNQPLSDPQLCLRLQQAIIKELQQENEQQPSPSSIVI.

The segment at 1-342 (MPQVDPELFD…WEGESGPIVP (342 aa)) is uridylyltransferase. A uridylyl-removing region spans residues 343–705 (LNSRFQVRDG…TTQREFEGGT (363 aa)). One can recognise an HD domain in the interval 461-583 (VDAHTLNVIK…VGDETHLDYL (123 aa)). ACT domains follow at residues 706–789 (QIFI…IIQR) and 816–896 (ILEI…PSPS).

This sequence belongs to the GlnD family. Mg(2+) serves as cofactor.

The enzyme catalyses [protein-PII]-L-tyrosine + UTP = [protein-PII]-uridylyl-L-tyrosine + diphosphate. It carries out the reaction [protein-PII]-uridylyl-L-tyrosine + H2O = [protein-PII]-L-tyrosine + UMP + H(+). With respect to regulation, uridylyltransferase (UTase) activity is inhibited by glutamine, while glutamine activates uridylyl-removing (UR) activity. Modifies, by uridylylation and deuridylylation, the PII regulatory proteins (GlnB and homologs), in response to the nitrogen status of the cell that GlnD senses through the glutamine level. Under low glutamine levels, catalyzes the conversion of the PII proteins and UTP to PII-UMP and PPi, while under higher glutamine levels, GlnD hydrolyzes PII-UMP to PII and UMP (deuridylylation). Thus, controls uridylylation state and activity of the PII proteins, and plays an important role in the regulation of nitrogen fixation and metabolism. This chain is Bifunctional uridylyltransferase/uridylyl-removing enzyme, found in Stutzerimonas stutzeri (strain A1501) (Pseudomonas stutzeri).